The following is a 131-amino-acid chain: uncharacterized protein (131 aa).

Residues 17-39 traverse the membrane as a helical segment; that stretch reads VILLILILLPVVFLHIMLATWGL.

Its subcellular location is the membrane. This is an uncharacterized protein from Archaeoglobus fulgidus (strain ATCC 49558 / DSM 4304 / JCM 9628 / NBRC 100126 / VC-16).